Here is a 64-residue protein sequence, read N- to C-terminus: Prokaryotic ubiquitin-like protein Pup (64 aa).

Positions 1-11 (MAQEQTKRTGG) are enriched in basic and acidic residues. A disordered region spans residues 1 to 38 (MAQEQTKRTGGGDEDDTPGGDGAAGQERREKLAEDTDD). Positions 21-58 (DGAAGQERREKLAEDTDDLLDEIDDVLEENAEDFVRAY) are ARC ATPase binding. Positions 24 to 52 (AGQERREKLAEDTDDLLDEIDDVLEENAE) form a coiled coil. Gln-64 carries the post-translational modification Deamidated glutamine. Gln-64 is covalently cross-linked (Isoglutamyl lysine isopeptide (Gln-Lys) (interchain with K-? in acceptor proteins)).

Belongs to the prokaryotic ubiquitin-like protein family. Strongly interacts with the proteasome-associated ATPase ARC through a hydrophobic interface; the interacting region of Pup lies in its C-terminal half. There is one Pup binding site per ARC hexamer ring. Is modified by deamidation of its C-terminal glutamine to glutamate by the deamidase Dop, a prerequisite to the subsequent pupylation process.

Its pathway is protein degradation; proteasomal Pup-dependent pathway. Protein modifier that is covalently attached to lysine residues of substrate proteins, thereby targeting them for proteasomal degradation. The tagging system is termed pupylation. The sequence is that of Prokaryotic ubiquitin-like protein Pup from Rhodococcus opacus (strain B4).